A 262-amino-acid polypeptide reads, in one-letter code: Phosphatidylserine decarboxylase proenzyme (262 aa).

Active-site charge relay system; for autoendoproteolytic cleavage activity residues include Asp86, His142, and Ser226. The active-site Schiff-base intermediate with substrate; via pyruvic acid; for decarboxylase activity is the Ser226. At Ser226 the chain carries Pyruvic acid (Ser); by autocatalysis.

The protein belongs to the phosphatidylserine decarboxylase family. PSD-B subfamily. Prokaryotic type I sub-subfamily. As to quaternary structure, heterodimer of a large membrane-associated beta subunit and a small pyruvoyl-containing alpha subunit. The cofactor is pyruvate. In terms of processing, is synthesized initially as an inactive proenzyme. Formation of the active enzyme involves a self-maturation process in which the active site pyruvoyl group is generated from an internal serine residue via an autocatalytic post-translational modification. Two non-identical subunits are generated from the proenzyme in this reaction, and the pyruvate is formed at the N-terminus of the alpha chain, which is derived from the carboxyl end of the proenzyme. The autoendoproteolytic cleavage occurs by a canonical serine protease mechanism, in which the side chain hydroxyl group of the serine supplies its oxygen atom to form the C-terminus of the beta chain, while the remainder of the serine residue undergoes an oxidative deamination to produce ammonia and the pyruvoyl prosthetic group on the alpha chain. During this reaction, the Ser that is part of the protease active site of the proenzyme becomes the pyruvoyl prosthetic group, which constitutes an essential element of the active site of the mature decarboxylase.

Its subcellular location is the cell membrane. The catalysed reaction is a 1,2-diacyl-sn-glycero-3-phospho-L-serine + H(+) = a 1,2-diacyl-sn-glycero-3-phosphoethanolamine + CO2. Its pathway is phospholipid metabolism; phosphatidylethanolamine biosynthesis; phosphatidylethanolamine from CDP-diacylglycerol: step 2/2. Its function is as follows. Catalyzes the formation of phosphatidylethanolamine (PtdEtn) from phosphatidylserine (PtdSer). In Bacillus thuringiensis (strain Al Hakam), this protein is Phosphatidylserine decarboxylase proenzyme.